The chain runs to 327 residues: Solute-binding protein SPO1773 (327 aa).

The signal sequence occupies residues 1 to 26 (MTISFKGLARGVACAALVLAALPAAA). 3-hydroxybenzoate-binding positions include 39 to 41 (HTW), Arg-150, 170 to 172 (RIT), and Asp-211.

It belongs to the bacterial solute-binding protein 7 family. The complex is comprised of an extracytoplasmic solute-binding protein and a heteromeric permease formed by two transmembrane proteins.

It is found in the periplasm. In terms of biological role, solute-binding protein that binds 3,4-dihydroxybenzoate and 3-hydroxybenzoate (in vitro). Probably part of a tripartite ATP-independent periplasmic (TRAP) transport system that mediates solute transport into the cytoplasm. The polypeptide is Solute-binding protein SPO1773 (Ruegeria pomeroyi (strain ATCC 700808 / DSM 15171 / DSS-3) (Silicibacter pomeroyi)).